A 507-amino-acid chain; its full sequence is Inactive alanine aminotransferase (507 aa).

Positions 173, 174, 199, 255, and 324 each coordinate pyridoxal 5'-phosphate. Lysine 327 is subject to N6-(pyridoxal phosphate)lysine. Residue arginine 336 coordinates pyridoxal 5'-phosphate.

Belongs to the class-I pyridoxal-phosphate-dependent aminotransferase family. Alanine aminotransferase subfamily. In terms of assembly, homodimer. Pyridoxal 5'-phosphate serves as cofactor.

Its subcellular location is the cytoplasm. The protein resides in the nucleus. In terms of biological role, inactive alanine aminotransferase. Forms a catalytically active Schiff base with PLP, but lacks alanine transaminase activity, probably due to an altered structural conformation of the dimeric enzyme. This suggests this protein may have a yet undiscovered physiological function. The chain is Inactive alanine aminotransferase (ALT2) from Saccharomyces cerevisiae (strain ATCC 204508 / S288c) (Baker's yeast).